The following is a 542-amino-acid chain: Calcium/calmodulin-dependent protein kinase type II subunit beta (542 aa).

One can recognise a Protein kinase domain in the interval Tyr14–Val272. Tyr17 is subject to Phosphotyrosine. ATP contacts are provided by residues Ile20 to Val28 and Lys43. Asp136 functions as the Proton acceptor in the catalytic mechanism. The interval His283–Lys292 is autoinhibitory domain. Thr287 is modified (phosphothreonine; by autocatalysis). The tract at residues Leu291–Lys301 is calmodulin-binding. Phosphothreonine; by autocatalysis is present on residues Thr306 and Thr307. The segment at Ala349 to Thr407 is disordered. The span at Pro354 to Lys369 shows a compositional bias: polar residues. Residues Ser367, Ser394, and Ser397 each carry the phosphoserine modification. Phosphothreonine occurs at positions 400 and 401.

It belongs to the protein kinase superfamily. CAMK Ser/Thr protein kinase family. CaMK subfamily. As to quaternary structure, CAMK2 is composed of 4 different chains: alpha (CAMK2A), beta (CAMK2B), gamma (CAMK2G), and delta (CAMK2D). The different isoforms assemble into homo- or heteromultimeric holoenzymes composed of 12 subunits with two hexameric rings stacked one on top of the other. Interacts with SYNGAP1, CAMK2N2 and MPDZ. Interacts with FOXO3. Interacts (when in a kinase inactive state not associated with calmodulin) with ARC; leading to target ARC to inactive synapses. Interacts with CAMK2N1; this interaction requires CAMK2B activation by Ca(2+). Autophosphorylation of Thr-287 following activation by Ca(2+)/calmodulin. Phosphorylation of Thr-287 locks the kinase into an activated state.

It is found in the cytoplasm. It localises to the cytoskeleton. The protein localises to the microtubule organizing center. Its subcellular location is the centrosome. The protein resides in the sarcoplasmic reticulum membrane. It is found in the synapse. The enzyme catalyses L-seryl-[protein] + ATP = O-phospho-L-seryl-[protein] + ADP + H(+). It catalyses the reaction L-threonyl-[protein] + ATP = O-phospho-L-threonyl-[protein] + ADP + H(+). Its activity is regulated as follows. Activated by Ca(2+)/calmodulin. Binding of calmodulin results in conformational change that relieves intrasteric autoinhibition and allows autophosphorylation of Thr-287 which turns the kinase in a constitutively active form and confers to the kinase a Ca(2+)-independent activity. Its function is as follows. Calcium/calmodulin-dependent protein kinase that functions autonomously after Ca(2+)/calmodulin-binding and autophosphorylation, and is involved in dendritic spine and synapse formation, neuronal plasticity and regulation of sarcoplasmic reticulum Ca(2+) transport in skeletal muscle. In neurons, plays an essential structural role in the reorganization of the actin cytoskeleton during plasticity by binding and bundling actin filaments in a kinase-independent manner. This structural function is required for correct targeting of CaMK2A, which acts downstream of NMDAR to promote dendritic spine and synapse formation and maintain synaptic plasticity which enables long-term potentiation (LTP) and hippocampus-dependent learning. In developing hippocampal neurons, promotes arborization of the dendritic tree and in mature neurons, promotes dendritic remodeling. Also regulates the migration of developing neurons. Participates in the modulation of skeletal muscle function in response to exercise. In slow-twitch muscles, is involved in regulation of sarcoplasmic reticulum (SR) Ca(2+) transport and in fast-twitch muscle participates in the control of Ca(2+) release from the SR through phosphorylation of triadin, a ryanodine receptor-coupling factor, and phospholamban (PLN/PLB), an endogenous inhibitor of SERCA2A/ATP2A2. In response to interferon-gamma (IFN-gamma) stimulation, catalyzes phosphorylation of STAT1, stimulating the JAK-STAT signaling pathway. Phosphorylates reticulophagy regulator RETREG1 at 'Ser-147' under endoplasmic reticulum stress conditions which enhances RETREG1 oligomerization and its membrane scission and reticulophagy activity. In Bos taurus (Bovine), this protein is Calcium/calmodulin-dependent protein kinase type II subunit beta (CAMK2B).